We begin with the raw amino-acid sequence, 150 residues long: UPF0260 protein VIBHAR_03078 (150 aa).

It belongs to the UPF0260 family.

The chain is UPF0260 protein VIBHAR_03078 from Vibrio campbellii (strain ATCC BAA-1116).